Consider the following 215-residue polypeptide: Ribose-5-phosphate isomerase A (215 aa).

Residues 26-29, 79-82, and 92-95 each bind substrate; these read TGST, DGAD, and KGGG. Glutamate 101 acts as the Proton acceptor in catalysis. Lysine 119 provides a ligand contact to substrate.

Belongs to the ribose 5-phosphate isomerase family. In terms of assembly, homodimer.

The catalysed reaction is aldehydo-D-ribose 5-phosphate = D-ribulose 5-phosphate. The protein operates within carbohydrate degradation; pentose phosphate pathway; D-ribose 5-phosphate from D-ribulose 5-phosphate (non-oxidative stage): step 1/1. Catalyzes the reversible conversion of ribose-5-phosphate to ribulose 5-phosphate. The polypeptide is Ribose-5-phosphate isomerase A (Xylella fastidiosa (strain Temecula1 / ATCC 700964)).